A 61-amino-acid polypeptide reads, in one-letter code: Large ribosomal subunit protein uL30 (61 aa).

The protein belongs to the universal ribosomal protein uL30 family. In terms of assembly, part of the 50S ribosomal subunit.

The protein is Large ribosomal subunit protein uL30 of Acidithiobacillus ferrooxidans (strain ATCC 23270 / DSM 14882 / CIP 104768 / NCIMB 8455) (Ferrobacillus ferrooxidans (strain ATCC 23270)).